Reading from the N-terminus, the 631-residue chain is tRNA 5-methylaminomethyl-2-thiouridine biosynthesis bifunctional protein MnmC (631 aa).

Residues 1–243 (MITDLRPPAM…KREMLTGRLP (243 aa)) form a tRNA (mnm(5)s(2)U34)-methyltransferase region. Residues 261 to 631 (IGAGIAGAAL…GRLYRNQLTV (371 aa)) form an FAD-dependent cmnm(5)s(2)U34 oxidoreductase region.

This sequence in the N-terminal section; belongs to the methyltransferase superfamily. tRNA (mnm(5)s(2)U34)-methyltransferase family. The protein in the C-terminal section; belongs to the DAO family. The cofactor is FAD.

The protein resides in the cytoplasm. It carries out the reaction 5-aminomethyl-2-thiouridine(34) in tRNA + S-adenosyl-L-methionine = 5-methylaminomethyl-2-thiouridine(34) in tRNA + S-adenosyl-L-homocysteine + H(+). In terms of biological role, catalyzes the last two steps in the biosynthesis of 5-methylaminomethyl-2-thiouridine (mnm(5)s(2)U) at the wobble position (U34) in tRNA. Catalyzes the FAD-dependent demodification of cmnm(5)s(2)U34 to nm(5)s(2)U34, followed by the transfer of a methyl group from S-adenosyl-L-methionine to nm(5)s(2)U34, to form mnm(5)s(2)U34. The protein is tRNA 5-methylaminomethyl-2-thiouridine biosynthesis bifunctional protein MnmC of Marinobacter nauticus (strain ATCC 700491 / DSM 11845 / VT8) (Marinobacter aquaeolei).